The primary structure comprises 192 residues: Molybdenum cofactor guanylyltransferase (192 aa).

Residues 10–12 (LAG), K23, N51, D69, and D99 each bind GTP. D99 is a Mg(2+) binding site.

It belongs to the MobA family. As to quaternary structure, monomer. Mg(2+) is required as a cofactor.

It is found in the cytoplasm. The enzyme catalyses Mo-molybdopterin + GTP + H(+) = Mo-molybdopterin guanine dinucleotide + diphosphate. In terms of biological role, transfers a GMP moiety from GTP to Mo-molybdopterin (Mo-MPT) cofactor (Moco or molybdenum cofactor) to form Mo-molybdopterin guanine dinucleotide (Mo-MGD) cofactor. The sequence is that of Molybdenum cofactor guanylyltransferase from Haemophilus influenzae (strain 86-028NP).